An 880-amino-acid chain; its full sequence is MSGSLYRSPSAALYKSPSMSAFGGLPAAFGSMSVADLGSLTRLEDKIRLLQEDLESARELRNRIERERADLSVQLIALTDRLEDAEGTTDSQIESNRKREAELQKLRKLLEESQLENEDAMNILRKKHQDACLDYAEQIEQLQKKNSKIDRERQRLQHEVIELTATIDQLKKDKHLAEKAAERFEAQTVELSNKVEDLNRHVNDLAQQRQRLQAENNDLLKEIHDQKVQLDNLQHVKYQLAQQLEEARRRLEDAERERSQLQAQLHQVQLELDSVRTALDEESAARAEAEHKLALANTEITQWKSKFDAEVALHHEEVEDLRKKMLQKQAEYEEQIEIMLQKISQLEKAKSRLQSEVEVLIVDLEKAQNTIAILERAKEQLEKTVNELKVRIDELTVELEAAQREARAALAELQKLKNLYEKAVEQKEALARENKKLQDDLHEAKEALADANRKLHELDLENARLAGEIRELQTALKESEAARRDAENRAQRALAELQQLRIEMERRLQEKEEEMEALRKNMQFEIDRLTAALADAEARMKAEISRLKKKYQAEIAELEMTVDNLNRANIEAQKTIKKQSEQLKILQASLEDTQRQLQQTLDQYALAQRKVSALSAELEECKVALDNAIRARKQAEIDLEEANGRITDLVSVNNNLTAIKNKLETELSTAQADLDEATKELHAADERANRALADAARAVEQLHEEQEHSMKIDALRKSLEEQVKQLQVQFRKLKRRLLGGKRVIAKLETRIRDLETALDEETRRHKETQGALRKKDRRIKEVQMQVDEEHKMFVMAQDTADRLLEKLNIQKRQLGEAESLTMANLRVRRYQRELEDAEGRADQAESSLHLIRAKHRHQLLRAKMLQRQKFTFSKMSNRDN.

A nonhelical region region spans residues 1-34 (MSGSLYRSPSAALYKSPSMSAFGGLPAAFGSMSV). The stretch at 35-859 (ADLGSLTRLE…LIRAKHRHQL (825 aa)) forms a coiled coil. The nonhelical region stretch occupies residues 860-880 (LRAKMLQRQKFTFSKMSNRDN).

Belongs to the paramyosin family. Homodimer.

The protein localises to the cytoplasm. It is found in the myofibril. Paramyosin is a major structural component of many thick filaments isolated from invertebrate muscles. The polypeptide is Paramyosin (Brugia malayi (Filarial nematode worm)).